A 317-amino-acid chain; its full sequence is Small glutamine-rich tetratricopeptide repeat-containing protein 2 (317 aa).

TPR repeat units lie at residues 14–48 (LKQAITTGSISEEEKESLEVAAQCIQDSFKIKPEE), 83–116 (AEKLKLEGNNAIAAKDYQKALDLYTKAIEIDPTS), 118–150 (VYYSNRAAAYNQLGQFENAVEDALTCLSLDPHH), and 151–184 (ARAFGRLGRAKLSLGDAAAAADAYKKGLDFDPNN). The segment covering 198-215 (LNQPSDSSATSGADQART) has biased composition (polar residues). 2 disordered regions span residues 198–224 (LNQPSDSSATSGADQARTSAGAAPDLG) and 298–317 (MNNNNNGNTDNNNQGNPPPQ).

This sequence belongs to the SGT family.

The protein localises to the cytoplasm. It localises to the nucleus. Its function is as follows. Co-chaperone that binds to the molecular chaperone Hsp70 and regulates Hsp70 ATPase activity. This Schizosaccharomyces pombe (strain 972 / ATCC 24843) (Fission yeast) protein is Small glutamine-rich tetratricopeptide repeat-containing protein 2 (sgt2).